A 156-amino-acid polypeptide reads, in one-letter code: Glutamate-rich protein 2 (156 aa).

Disordered regions lie at residues 29–66 (LQDI…TQAP) and 116–156 (EKTQ…EDGS). 2 stretches are compositionally biased toward acidic residues: residues 39 to 56 (SAED…DDED) and 140 to 156 (SDEE…EDGS).

The sequence is that of Glutamate-rich protein 2 (ERICH2) from Homo sapiens (Human).